Consider the following 252-residue polypeptide: Small ribosomal subunit protein eS1A (252 aa).

The residue at position 2 (Ala-2) is an N-acetylalanine; partial.

It belongs to the eukaryotic ribosomal protein eS1 family. In terms of assembly, component of the small ribosomal subunit (SSU). Mature yeast ribosomes consist of a small (40S) and a large (60S) subunit. The 40S small subunit contains 1 molecule of ribosomal RNA (18S rRNA) and at least 33 different proteins. The large 60S subunit contains 3 rRNA molecules (25S, 5.8S and 5S rRNA) and at least 46 different proteins. eS1 interacts directly with uS11 and eS26, which form part of the mRNA exit tunnel.

It is found in the cytoplasm. Its function is as follows. Component of the ribosome, a large ribonucleoprotein complex responsible for the synthesis of proteins in the cell. The small ribosomal subunit (SSU) binds messenger RNAs (mRNAs) and translates the encoded message by selecting cognate aminoacyl-transfer RNA (tRNA) molecules. The large subunit (LSU) contains the ribosomal catalytic site termed the peptidyl transferase center (PTC), which catalyzes the formation of peptide bonds, thereby polymerizing the amino acids delivered by tRNAs into a polypeptide chain. The nascent polypeptides leave the ribosome through a tunnel in the LSU and interact with protein factors that function in enzymatic processing, targeting, and the membrane insertion of nascent chains at the exit of the ribosomal tunnel. This chain is Small ribosomal subunit protein eS1A (rps101), found in Schizosaccharomyces pombe (strain 972 / ATCC 24843) (Fission yeast).